Consider the following 294-residue polypeptide: NAD kinase (294 aa).

The active-site Proton acceptor is aspartate 74. NAD(+)-binding positions include 74-75 (DG), 148-149 (NE), histidine 159, arginine 176, aspartate 178, 189-194 (TAYSLS), and glutamine 249.

Belongs to the NAD kinase family. Requires a divalent metal cation as cofactor.

The protein localises to the cytoplasm. The catalysed reaction is NAD(+) + ATP = ADP + NADP(+) + H(+). Its function is as follows. Involved in the regulation of the intracellular balance of NAD and NADP, and is a key enzyme in the biosynthesis of NADP. Catalyzes specifically the phosphorylation on 2'-hydroxyl of the adenosine moiety of NAD to yield NADP. This Vibrio campbellii (strain ATCC BAA-1116) protein is NAD kinase.